The sequence spans 263 residues: uncharacterized protein (263 aa).

An N-terminal signal peptide occupies residues 1-22; the sequence is MEYLKRLALFISVIILTIFIMG. The N-palmitoyl cysteine moiety is linked to residue cysteine 23. The S-diacylglycerol cysteine moiety is linked to residue cysteine 23.

It belongs to the staphylococcal tandem lipoprotein family.

Its subcellular location is the cell membrane. This is an uncharacterized protein from Staphylococcus aureus (strain MSSA476).